A 206-amino-acid chain; its full sequence is Ribosome maturation factor RimM (206 aa).

Residues 113–206 (DDEYYWVDLI…RIDSNWPTEL (94 aa)) form the PRC barrel domain.

This sequence belongs to the RimM family. As to quaternary structure, binds ribosomal protein uS19.

It is found in the cytoplasm. Its function is as follows. An accessory protein needed during the final step in the assembly of 30S ribosomal subunit, possibly for assembly of the head region. Essential for efficient processing of 16S rRNA. May be needed both before and after RbfA during the maturation of 16S rRNA. It has affinity for free ribosomal 30S subunits but not for 70S ribosomes. The chain is Ribosome maturation factor RimM from Bordetella petrii (strain ATCC BAA-461 / DSM 12804 / CCUG 43448).